The chain runs to 390 residues: Chorismate synthase (390 aa).

Arg39 and Arg45 together coordinate NADP(+). Residues 132 to 134 (RSS), 253 to 254 (NA), Gly298, 313 to 317 (KPIPT), and Arg339 each bind FMN.

This sequence belongs to the chorismate synthase family. In terms of assembly, homotetramer. Requires FMNH2 as cofactor.

The enzyme catalyses 5-O-(1-carboxyvinyl)-3-phosphoshikimate = chorismate + phosphate. It participates in metabolic intermediate biosynthesis; chorismate biosynthesis; chorismate from D-erythrose 4-phosphate and phosphoenolpyruvate: step 7/7. Catalyzes the anti-1,4-elimination of the C-3 phosphate and the C-6 proR hydrogen from 5-enolpyruvylshikimate-3-phosphate (EPSP) to yield chorismate, which is the branch point compound that serves as the starting substrate for the three terminal pathways of aromatic amino acid biosynthesis. This reaction introduces a second double bond into the aromatic ring system. The polypeptide is Chorismate synthase (Bacillus velezensis (strain DSM 23117 / BGSC 10A6 / LMG 26770 / FZB42) (Bacillus amyloliquefaciens subsp. plantarum)).